Reading from the N-terminus, the 242-residue chain is MSKSRLTVFSFVRRFLLRLMVVLAVFWAGGIALFSVAPVPFSAVMVERQVSAWLHGNFRYVAHSDWVSMDQISPWMGLAVIAAEDQKFPEHRGFDVASIEKALAHNERNENRIRGASTISQQTAKNLFLWDGRSWVRKGLEAGLTLGIETVWSKKRILTVYLNIAEFGDGVFGVEAAAQRYFHKPASKLTRSEAALLAAVLPNPLRFKVSSPSGYVRSRQAWILRQMYQLGGEPFMQQHQLD.

Residues 19 to 39 (LMVVLAVFWAGGIALFSVAPV) traverse the membrane as a helical segment.

This sequence belongs to the glycosyltransferase 51 family.

It localises to the cell inner membrane. The enzyme catalyses [GlcNAc-(1-&gt;4)-Mur2Ac(oyl-L-Ala-gamma-D-Glu-L-Lys-D-Ala-D-Ala)](n)-di-trans,octa-cis-undecaprenyl diphosphate + beta-D-GlcNAc-(1-&gt;4)-Mur2Ac(oyl-L-Ala-gamma-D-Glu-L-Lys-D-Ala-D-Ala)-di-trans,octa-cis-undecaprenyl diphosphate = [GlcNAc-(1-&gt;4)-Mur2Ac(oyl-L-Ala-gamma-D-Glu-L-Lys-D-Ala-D-Ala)](n+1)-di-trans,octa-cis-undecaprenyl diphosphate + di-trans,octa-cis-undecaprenyl diphosphate + H(+). Its pathway is cell wall biogenesis; peptidoglycan biosynthesis. Functionally, peptidoglycan polymerase that catalyzes glycan chain elongation from lipid-linked precursors. This chain is Biosynthetic peptidoglycan transglycosylase, found in Shigella boydii serotype 4 (strain Sb227).